A 132-amino-acid chain; its full sequence is Small ribosomal subunit protein uS8 (132 aa).

This sequence belongs to the universal ribosomal protein uS8 family. In terms of assembly, part of the 30S ribosomal subunit. Contacts proteins S5 and S12.

Functionally, one of the primary rRNA binding proteins, it binds directly to 16S rRNA central domain where it helps coordinate assembly of the platform of the 30S subunit. The chain is Small ribosomal subunit protein uS8 from Borreliella afzelii (strain PKo) (Borrelia afzelii).